Reading from the N-terminus, the 92-residue chain is Small ribosomal subunit protein uS19 (92 aa).

Belongs to the universal ribosomal protein uS19 family.

Protein S19 forms a complex with S13 that binds strongly to the 16S ribosomal RNA. This Dinoroseobacter shibae (strain DSM 16493 / NCIMB 14021 / DFL 12) protein is Small ribosomal subunit protein uS19.